Reading from the N-terminus, the 234-residue chain is Zinc finger BED domain-containing protein 3 (234 aa).

The tract at residues 19-42 (AAARGGQCPGLGPAPTPTPPGRLG) is disordered. A BED-type zinc finger spans residues 43-104 (APYSEAWGYF…SAHRRELESS (62 aa)). Cys-69, Cys-72, His-92, and His-97 together coordinate Zn(2+). Disordered stretches follow at residues 94 to 126 (RSAH…AAPE) and 202 to 225 (REGA…GDRD). Residues 111-122 (PAAPCPPPPGPA) are compositionally biased toward pro residues. Over residues 216-225 (LKDDPEGDRD) the composition is skewed to basic and acidic residues.

In terms of assembly, associates with the subcortical maternal complex (SCMC) composed of at least NLRP5, KHDC3L, OOEP, and TLE6 via interaction with NLRP5 and TLE6. Interacts with AXIN1; the interaction is direct, enhanced by protein kinase GSK3B and casein kinase CSNK1E activities and decreases GSK3B-induced beta-catenin serine and threonine phosphorylations. In terms of tissue distribution, secreted in blood plasma, and expressed in skeletal muscle and adipose tissue (at protein level).

Its subcellular location is the cytoplasm. The protein localises to the membrane. The protein resides in the secreted. Its function is as follows. Acts as a positive regulator in the activation of the canonical Wnt/beta-catenin signaling pathway by stabilizing cytoplasmic beta-catenin. Involved in transcription activation of Wnt target gene expression. Plays a role in symmetric division of blastomeres in the early stages of embryogenesis via regulation of mitotic spindle central positioning and organization of the F-actin filament network. Plays a role in regulating the distribution of cellular organelles, via modulation of cytoskeletal dynamics and cytoplasmic lattice formation. The chain is Zinc finger BED domain-containing protein 3 (ZBED3) from Homo sapiens (Human).